A 309-amino-acid chain; its full sequence is Olfactory receptor 10J5 (309 aa).

The Extracellular segment spans residues 1–25 (MKRKNFTEVSEFIFLGFSSFGKHQI). Asn-5 carries an N-linked (GlcNAc...) asparagine glycan. The helical transmembrane segment at 26–46 (TLFVVFLTVYILTLVANIIIV) threads the bilayer. At 47 to 54 (TIICIDHH) the chain is on the cytoplasmic side. The helical transmembrane segment at 55–75 (LHTPMYFFLSMLASSETVYTL) threads the bilayer. Over 76 to 99 (VIVPRMLLSLIFHNQPISLAGCAT) the chain is Extracellular. A disulfide bond links Cys-97 and Cys-188. Residues 100–120 (QMFFFVILATNNCFLLTAMGY) traverse the membrane as a helical segment. The Cytoplasmic segment spans residues 121–139 (DRYVAICRPLRYTVIMSKG). The chain crosses the membrane as a helical span at residues 140–160 (LCAQLVCGSFGIGLTMAVLHV). The Extracellular segment spans residues 161 to 196 (TAMFNLPFCGTVVDHFFCDIYPVMKLSCIDTTINEI). A helical membrane pass occupies residues 197-216 (INYGVSSFVIFVPIGLIFIS). The Cytoplasmic portion of the chain corresponds to 217 to 236 (YVLVISSILQIASAEGRKKT). Residues 237–257 (FATCVSHLTVVIVHCGCASIA) traverse the membrane as a helical segment. At 258–270 (YLKPKSESSIEKD) the chain is on the extracellular side. Residues 271-291 (LVLSVTYTIITPLLNPVVYSL) form a helical membrane-spanning segment. At 292 to 309 (RNKEVKDALCRVVGRNIS) the chain is on the cytoplasmic side.

It belongs to the G-protein coupled receptor 1 family. In terms of tissue distribution, expressed in both the aorta, the coronary artery and umbilical vein endothelial cells (HUVECs) (at protein level).

The protein resides in the cell membrane. In terms of biological role, olfactory receptor. Activated by the synthetic floral odorant, lyral, and by alpha-cedrene, a sesquiterpene constituent of cedarwood oil. Its activation increases intracellular Ca(2+). Acts as a key regulator of myogenesis through its actions on cell migration and adhesion by activating the Ca(2+)-dependent AKT signal transduction pathway. Also acts as a regulator of angiogenesis. Moreover, plays a role in the regulation of lipid accumulation in hepatocytes via the cAMP-PKA pathway. May be involved in sperm chemotaxis and motility. In Homo sapiens (Human), this protein is Olfactory receptor 10J5.